Here is a 209-residue protein sequence, read N- to C-terminus: Small ribosomal subunit protein uS4 (209 aa).

Residues 98 to 159 (RRLDSAVYRL…KSRKITRIND (62 aa)) enclose the S4 RNA-binding domain.

It belongs to the universal ribosomal protein uS4 family. As to quaternary structure, part of the 30S ribosomal subunit. Contacts protein S5. The interaction surface between S4 and S5 is involved in control of translational fidelity.

Its function is as follows. One of the primary rRNA binding proteins, it binds directly to 16S rRNA where it nucleates assembly of the body of the 30S subunit. With S5 and S12 plays an important role in translational accuracy. The chain is Small ribosomal subunit protein uS4 from Syntrophotalea carbinolica (strain DSM 2380 / NBRC 103641 / GraBd1) (Pelobacter carbinolicus).